Here is an 896-residue protein sequence, read N- to C-terminus: Translation initiation factor IF-2 (896 aa).

Disordered stretches follow at residues 53–81 and 117–301; these read HGGE…SASK and AEEA…ESMD. Over residues 60–79 the composition is skewed to polar residues; the sequence is TKMTLQRKSVSTLSVGSGSA. Residues 117 to 227 are compositionally biased toward basic and acidic residues; it reads AEEAASKAKA…ESEKTGDHHV (111 aa). The span at 254–266 shows a compositional bias: low complexity; it reads ATPAPAAAPANTG. Residues 273–282 show a composition bias toward basic and acidic residues; sequence GKDNRRDSRN. Over residues 283–294 the composition is skewed to low complexity; sequence ARGGRNARNNRS. Residues 394-563 enclose the tr-type G domain; that stretch reads SRAPVVTIMG…LLEAEVLELK (170 aa). Positions 403-410 are G1; that stretch reads GHVDHGKT. 403 to 410 provides a ligand contact to GTP; that stretch reads GHVDHGKT. The interval 428–432 is G2; the sequence is GITQH. Residues 449-452 are G3; it reads DTPG. Residues 449–453 and 503–506 each bind GTP; these read DTPGH and NKID. The interval 503–506 is G4; that stretch reads NKID. A G5 region spans residues 539–541; it reads SAK.

It belongs to the TRAFAC class translation factor GTPase superfamily. Classic translation factor GTPase family. IF-2 subfamily.

The protein resides in the cytoplasm. Its function is as follows. One of the essential components for the initiation of protein synthesis. Protects formylmethionyl-tRNA from spontaneous hydrolysis and promotes its binding to the 30S ribosomal subunits. Also involved in the hydrolysis of GTP during the formation of the 70S ribosomal complex. The sequence is that of Translation initiation factor IF-2 from Shewanella sediminis (strain HAW-EB3).